The primary structure comprises 400 residues: Protein phosphatase methylesterase 1 (400 aa).

The interval 1-72 is disordered; the sequence is MSDLQRTWAK…NQKLFARPQG (72 aa). Over residues 19 to 28 the composition is skewed to acidic residues; that stretch reads PFDEPQEEQG. Positions 44-54 are enriched in low complexity; sequence SSASSASSVSS. The segment covering 55 to 64 has biased composition (polar residues); that stretch reads TGTIIPSPNQ. Residues Ser-202, Asp-228, and His-358 contribute to the active site.

This sequence belongs to the AB hydrolase superfamily.

The enzyme catalyses [phosphatase 2A protein]-C-terminal L-leucine methyl ester + H2O = [phosphatase 2A protein]-C-terminal L-leucine + methanol + H(+). Functionally, demethylates proteins that have been reversibly carboxymethylated. Demethylates the phosphatase PP2A catalytic subunit. The protein is Protein phosphatase methylesterase 1 (PPE1) of Gibberella zeae (strain ATCC MYA-4620 / CBS 123657 / FGSC 9075 / NRRL 31084 / PH-1) (Wheat head blight fungus).